Consider the following 370-residue polypeptide: 3-dehydroquinate synthase (370 aa).

Residues 108-112 (GVIGD), 132-133 (TT), lysine 145, and lysine 154 each bind NAD(+). Zn(2+) is bound by residues glutamate 187, histidine 249, and histidine 267.

This sequence belongs to the sugar phosphate cyclases superfamily. Dehydroquinate synthase family. It depends on Co(2+) as a cofactor. Zn(2+) is required as a cofactor. Requires NAD(+) as cofactor.

Its subcellular location is the cytoplasm. It catalyses the reaction 7-phospho-2-dehydro-3-deoxy-D-arabino-heptonate = 3-dehydroquinate + phosphate. It functions in the pathway metabolic intermediate biosynthesis; chorismate biosynthesis; chorismate from D-erythrose 4-phosphate and phosphoenolpyruvate: step 2/7. Catalyzes the conversion of 3-deoxy-D-arabino-heptulosonate 7-phosphate (DAHP) to dehydroquinate (DHQ). This is 3-dehydroquinate synthase from Cereibacter sphaeroides (strain ATCC 17029 / ATH 2.4.9) (Rhodobacter sphaeroides).